The sequence spans 513 residues: Na(+)/H(+) antiporter NhaB (513 aa).

A run of 12 helical transmembrane segments spans residues 23–43, 52–72, 97–117, 120–140, 144–164, 202–222, 238–258, 303–323, 348–368, 391–411, 447–467, and 475–495; these read LALI…PFVA, IFTL…LLAI, LLLM…LFIF, LLLS…AAAF, FLDA…FYGI, LMMH…VGEP, FFLR…LTCL, AIIG…VGLI, TESL…AVII, LFYI…VGTI, ATPN…APLI, and VWMA…CVEF.

The protein belongs to the NhaB Na(+)/H(+) (TC 2.A.34) antiporter family.

It localises to the cell inner membrane. The enzyme catalyses 2 Na(+)(in) + 3 H(+)(out) = 2 Na(+)(out) + 3 H(+)(in). Its function is as follows. Na(+)/H(+) antiporter that extrudes sodium in exchange for external protons. The protein is Na(+)/H(+) antiporter NhaB of Escherichia coli (strain 55989 / EAEC).